The chain runs to 219 residues: Dual specificity phosphatase 29 (219 aa).

The Tyrosine-protein phosphatase domain occupies 53 to 201 (HVNEVWPKLY…LRELDRQLVQ (149 aa)). 145–152 (HCVMGRSR) serves as a coordination point for substrate. The active-site Phosphocysteine intermediate is Cys146.

It belongs to the protein-tyrosine phosphatase family. Non-receptor class dual specificity subfamily. As to quaternary structure, homodimer. Interacts with PRKAA2.

Its subcellular location is the cytoplasm. It is found in the nucleus. The enzyme catalyses O-phospho-L-tyrosyl-[protein] + H2O = L-tyrosyl-[protein] + phosphate. The catalysed reaction is O-phospho-L-seryl-[protein] + H2O = L-seryl-[protein] + phosphate. It catalyses the reaction O-phospho-L-threonyl-[protein] + H2O = L-threonyl-[protein] + phosphate. Functionally, dual specificity phosphatase able to dephosphorylate phosphotyrosine, phosphoserine and phosphothreonine residues within the same substrate, with a preference for phosphotyrosine as a substrate. Involved in the modulation of intracellular signaling cascades. May regulate glucose metabolism by activating, AMPK, an energy sensor protein kinase. Affects MAP kinase signaling though modulation of the ERK1/2 cascade in skeletal muscle promoting muscle cell differentiation, development and atrophy. The polypeptide is Dual specificity phosphatase 29 (DUSP29) (Bos taurus (Bovine)).